Here is a 238-residue protein sequence, read N- to C-terminus: Phosphoribosylaminoimidazole-succinocarboxamide synthase (238 aa).

It belongs to the SAICAR synthetase family.

It catalyses the reaction 5-amino-1-(5-phospho-D-ribosyl)imidazole-4-carboxylate + L-aspartate + ATP = (2S)-2-[5-amino-1-(5-phospho-beta-D-ribosyl)imidazole-4-carboxamido]succinate + ADP + phosphate + 2 H(+). It functions in the pathway purine metabolism; IMP biosynthesis via de novo pathway; 5-amino-1-(5-phospho-D-ribosyl)imidazole-4-carboxamide from 5-amino-1-(5-phospho-D-ribosyl)imidazole-4-carboxylate: step 1/2. This chain is Phosphoribosylaminoimidazole-succinocarboxamide synthase, found in Methanococcoides burtonii (strain DSM 6242 / NBRC 107633 / OCM 468 / ACE-M).